The chain runs to 107 residues: Protamine-2 (107 aa).

The segment at 1-94 (MVRYRMRSPS…RRGCRRSRRR (94 aa)) is disordered. 3 positions are modified to phosphoserine: serine 8, serine 10, and serine 33. A compositionally biased stretch (basic residues) spans 43 to 94 (THRGHHHHRHRRCSRKRLHRIHKRRRSCRRRRRHSCRHRRRHRRGCRRSRRR).

It belongs to the protamine P2 family. As to quaternary structure, interacts with TDRP. In terms of processing, proteolytic processing into mature chains is required for histone eviction during spermatogenesis. Transition proteins (TNP1 and TNP2) are required for processing. As to expression, expressed in spermatids (at protein level).

The protein localises to the nucleus. Its subcellular location is the chromosome. Functionally, protamines substitute for histones in the chromatin of sperm during the haploid phase of spermatogenesis. They compact sperm DNA into a highly condensed, stable and inactive complex. This Mus musculus (Mouse) protein is Protamine-2 (Prm2).